The following is a 179-amino-acid chain: MSSFRWVRPLQLTLALIKPDAVANPVISEAVHQKILENNFLIIRHKELHWRSTDSQRFYCEHKGRFFYQRLVEFMSSGPMQAYILAHEDAVQLWRNLMGPTKVFRARIVAPGTVRGDLGLTDTRNTTHGSDSVESACREITFFFPEFNTSDWYEKQEPRYRTGPVFYDEERSEHRLEGE.

The ATP site is built by lysine 18, phenylalanine 67, arginine 95, threonine 101, arginine 115, and asparagine 125. Histidine 128 serves as the catalytic Pros-phosphohistidine intermediate.

The protein belongs to the NDK family. It depends on Mg(2+) as a cofactor.

It catalyses the reaction a 2'-deoxyribonucleoside 5'-diphosphate + ATP = a 2'-deoxyribonucleoside 5'-triphosphate + ADP. The enzyme catalyses a ribonucleoside 5'-diphosphate + ATP = a ribonucleoside 5'-triphosphate + ADP. Functionally, major role in the synthesis of nucleoside triphosphates other than ATP. The ATP gamma phosphate is transferred to the NDP beta phosphate via a ping-pong mechanism, using a phosphorylated active-site intermediate. This Xenopus tropicalis (Western clawed frog) protein is Nucleoside diphosphate kinase 6 (nme6).